The chain runs to 199 residues: Dephospho-CoA kinase (199 aa).

In terms of domain architecture, DPCK spans 3–199 (ILGLTGSIGM…ATAKMPQRRA (197 aa)). 11 to 16 (GMGKST) lines the ATP pocket.

Belongs to the CoaE family.

It is found in the cytoplasm. It carries out the reaction 3'-dephospho-CoA + ATP = ADP + CoA + H(+). It functions in the pathway cofactor biosynthesis; coenzyme A biosynthesis; CoA from (R)-pantothenate: step 5/5. In terms of biological role, catalyzes the phosphorylation of the 3'-hydroxyl group of dephosphocoenzyme A to form coenzyme A. This is Dephospho-CoA kinase from Rhodopseudomonas palustris (strain BisB18).